A 248-amino-acid polypeptide reads, in one-letter code: Cobalt transport protein CbiM (248 aa).

An N-terminal signal peptide occupies residues 1–31 (MLKVIKKYRKFITFLMIGLVYTLAYPATAHA). Helical transmembrane passes span 39 to 59 (LPPRWCIFWYAVSLPFFIYGL), 75 to 95 (VMLALCGAFVFVLSSLKLPSV), 107 to 127 (LGTVLFGPGVMSVLGVIVLLF), 139 to 159 (TLGANEFSMTIVGPIVGYAVW), 173 to 195 (LFLCAMFADWSTYVTTAFQLAIV), and 213 to 233 (IYAITQIPLAIAEGLLTVIVY).

Belongs to the CbiM family. Forms an energy-coupling factor (ECF) transporter complex composed of an ATP-binding protein (A component, CbiO), a transmembrane protein (T component, CbiQ) and 2 possible substrate-capture proteins (S components, CbiM and CbiN) of unknown stoichimetry.

It localises to the cell membrane. Its pathway is cofactor biosynthesis; adenosylcobalamin biosynthesis. In terms of biological role, part of the energy-coupling factor (ECF) transporter complex CbiMNOQ involved in cobalt import. The protein is Cobalt transport protein CbiM of Limosilactobacillus reuteri (strain DSM 20016) (Lactobacillus reuteri).